We begin with the raw amino-acid sequence, 396 residues long: Metallophosphoesterase 1 (396 aa).

Residues 28-48 (TVVIISVLLFCEYFIYYLVLF) form a helical membrane-spanning segment. Aspartate 75, aspartate 117, asparagine 155, histidine 249, histidine 303, and histidine 305 together coordinate a divalent metal cation. A helical transmembrane segment spans residues 356–376 (TVLTMYGAAAGFLMILILVHF).

This sequence belongs to the metallophosphoesterase superfamily. MPPE1 family. As to quaternary structure, interacts with GPI-anchor proteins (via the GPI portion). Interacts with TMED10. The cofactor is Mn(2+).

It is found in the endoplasmic reticulum-Golgi intermediate compartment membrane. Functionally, metallophosphoesterase that catalyzes the removal of a side-chain ethanolamine-phosphate (EtNP) from the second mannose of the GPI-anchor protein intermediate. Participates in the glycan remodeling steps of GPI-anchor maturation to allow an efficient transport of GPI-anchor proteins from the endoplasmic reticulum to the Golgi. The chain is Metallophosphoesterase 1 from Mus musculus (Mouse).